The following is a 219-amino-acid chain: 7-cyano-7-deazaguanine synthase (219 aa).

Residue Phe10–Leu20 participates in ATP binding. Zn(2+) is bound by residues Cys188, Cys196, Cys199, and Cys202.

The protein belongs to the QueC family. Zn(2+) serves as cofactor.

It catalyses the reaction 7-carboxy-7-deazaguanine + NH4(+) + ATP = 7-cyano-7-deazaguanine + ADP + phosphate + H2O + H(+). Its pathway is purine metabolism; 7-cyano-7-deazaguanine biosynthesis. In terms of biological role, catalyzes the ATP-dependent conversion of 7-carboxy-7-deazaguanine (CDG) to 7-cyano-7-deazaguanine (preQ(0)). The protein is 7-cyano-7-deazaguanine synthase of Neisseria gonorrhoeae (strain NCCP11945).